Consider the following 238-residue polypeptide: MTTFDGDTSAGEAVDLTEANAFQDAAAPAEEVDPAAALKAELRSKPGDWYVVHSYAGYENKVKANLETRVQNLDVGDYIFQVEVPTEEVTEIKNGQRKQVNRKVLPGYILVRMDLTDDSWAAVRNTPGVTGFVGATSRPSALALDDVVKFLLPRGSTRKAAKGAASTAAAAEAGGLERPVVEVDYEVGESVTVMDGPFATLPATISEVNAEQQKLKVLVSIFGRETPVELTFGQVSKI.

Belongs to the NusG family.

Functionally, participates in transcription elongation, termination and antitermination. The polypeptide is Transcription termination/antitermination protein NusG (Mycobacterium tuberculosis (strain CDC 1551 / Oshkosh)).